The chain runs to 282 residues: MTASTASAPLAFGDLQGCRTQFQQLLAKAAPPADAPLWFAGDLINRGGESLAMLRDIIALGDRAVPVLGNHDLHLLSVSAGIRKSKKGDTIDEILAAPDADDMLHWIRHRPLAHYENGMLLVHAGVLPQWDVDLTLELADELQRALRAPGWKETLAGLYGNEPNRWKPGLKGIDRLRLTCTALTRMRFCNADGVMDFSSSGGIGSAPAGFMPWFDVPGRKTEEITVVFGHWAALGLLIRDNLIGLDSGCVWGEQLSAVRLAQSAAERTVTQVECEGCRADVH.

Belongs to the Ap4A hydrolase family.

It catalyses the reaction P(1),P(4)-bis(5'-adenosyl) tetraphosphate + H2O = 2 ADP + 2 H(+). In terms of biological role, hydrolyzes diadenosine 5',5'''-P1,P4-tetraphosphate to yield ADP. The polypeptide is Bis(5'-nucleosyl)-tetraphosphatase, symmetrical (Paraburkholderia phymatum (strain DSM 17167 / CIP 108236 / LMG 21445 / STM815) (Burkholderia phymatum)).